The sequence spans 100 residues: Large ribosomal subunit protein uL23 (100 aa).

It belongs to the universal ribosomal protein uL23 family. As to quaternary structure, part of the 50S ribosomal subunit. Contacts protein L29, and trigger factor when it is bound to the ribosome.

Functionally, one of the early assembly proteins it binds 23S rRNA. One of the proteins that surrounds the polypeptide exit tunnel on the outside of the ribosome. Forms the main docking site for trigger factor binding to the ribosome. The polypeptide is Large ribosomal subunit protein uL23 (Mycolicibacterium smegmatis (strain ATCC 700084 / mc(2)155) (Mycobacterium smegmatis)).